Here is a 473-residue protein sequence, read N- to C-terminus: Vasculin-like protein 1 (473 aa).

A compositionally biased stretch (polar residues) spans 14 to 25; that stretch reads STPQSSKSSTAT. Positions 14-55 are disordered; it reads STPQSSKSSTATFDKHGEHLSRGEGRFGISRRRHNSSDGFFN. Over residues 26 to 38 the composition is skewed to basic and acidic residues; it reads FDKHGEHLSRGEG. Residues Ser49 and Ser76 each carry the phosphoserine modification. Disordered stretches follow at residues 88 to 127 and 155 to 189; these read GTTGWHGSSRGHDGMSQRSGGSSTGNHRHWNGSFHSRKGC and DFPSLNPEAGKQNQPCRPVGTPSGVWENPPSAKQP. The span at 103 to 112 shows a compositional bias: polar residues; it reads SQRSGGSSTG. The span at 113 to 125 shows a compositional bias: basic residues; sequence NHRHWNGSFHSRK. At Ser199 the chain carries Phosphoserine. Disordered stretches follow at residues 235-267 and 281-316; these read LVPKPAPPPSKPNAWKANRTEHKPGSLCSSRES and LAAGAGLHSPKESPSSTTPPIEISSSRLTKLTRRTT. Ser289 bears the Phosphoserine mark. Low complexity predominate over residues 292–309; the sequence is ESPSSTTPPIEISSSRLT. Residue Thr298 is modified to Phosphothreonine. Ser381 carries the post-translational modification Phosphoserine. A disordered region spans residues 453 to 473; sequence ECEDSDSETSSSQTSDDDAWK.

It belongs to the vasculin family.

Its subcellular location is the nucleus. Functionally, possible transcription factor. This is Vasculin-like protein 1 (Gpbp1l1) from Mus musculus (Mouse).